Reading from the N-terminus, the 446-residue chain is Phosphoglucosamine mutase (446 aa).

Catalysis depends on serine 102, which acts as the Phosphoserine intermediate. Residues serine 102, aspartate 241, aspartate 243, and aspartate 245 each coordinate Mg(2+). Residue serine 102 is modified to Phosphoserine.

Belongs to the phosphohexose mutase family. Mg(2+) is required as a cofactor. Activated by phosphorylation.

It carries out the reaction alpha-D-glucosamine 1-phosphate = D-glucosamine 6-phosphate. In terms of biological role, catalyzes the conversion of glucosamine-6-phosphate to glucosamine-1-phosphate. This is Phosphoglucosamine mutase from Idiomarina loihiensis (strain ATCC BAA-735 / DSM 15497 / L2-TR).